Reading from the N-terminus, the 213-residue chain is MSYAYLFKYIIIGDTGVGKSCLLLQFTDKRFQPVHDLTIGVEFGARMINIDGKQIKLQIWDTAGQESFRSITRSYYRGAAGALLVYDITRRETFNHLASWLEDARQHANPNMTIMLIGNKCDLTHRRAVTTEEGEQFAKEHGLIFLETSARTAHNVEEAFINTAKEIYKKIQDGVFDVSNESYGIKVGYGAGNAGPQAAKPGEGDARKSSSCC.

Residue G13 to C21 coordinates GTP. The Effector region motif lies at H35–F43. Residues D61 to Q65, N119 to D122, and S149 to R151 contribute to the GTP site. The interval A194–C213 is disordered. The span at G202–C213 shows a compositional bias: basic and acidic residues. Residues C212 and C213 are each lipidated (S-geranylgeranyl cysteine).

This sequence belongs to the small GTPase superfamily. Rab family.

The protein localises to the cell membrane. Its function is as follows. Protein transport. Probably involved in vesicular traffic. The sequence is that of GTP-binding protein yptV4 (YPTV4) from Volvox carteri (Green alga).